The chain runs to 78 residues: Probable [Fe-S]-dependent transcriptional repressor (78 aa).

Iron-sulfur cluster is bound by residues Cys-56, Cys-61, Cys-64, and Cys-70.

This sequence belongs to the FeoC family.

Its function is as follows. May function as a transcriptional regulator that controls feoABC expression. The chain is Probable [Fe-S]-dependent transcriptional repressor from Citrobacter koseri (strain ATCC BAA-895 / CDC 4225-83 / SGSC4696).